We begin with the raw amino-acid sequence, 360 residues long: Peptide chain release factor 1 (360 aa).

The residue at position 235 (Q235) is an N5-methylglutamine.

This sequence belongs to the prokaryotic/mitochondrial release factor family. Methylated by PrmC. Methylation increases the termination efficiency of RF1.

It is found in the cytoplasm. Functionally, peptide chain release factor 1 directs the termination of translation in response to the peptide chain termination codons UAG and UAA. The sequence is that of Peptide chain release factor 1 from Paracidovorax citrulli (strain AAC00-1) (Acidovorax citrulli).